The primary structure comprises 208 residues: AN1-type zinc finger protein 6 (208 aa).

An A20-type zinc finger spans residues 8 to 42; the sequence is SQVPMLCSTGCGFYGNPRTNGMCSVCYKEHLQRQN. Zn(2+) contacts are provided by Cys14, Cys18, Cys30, and Cys33. Residues 41–110 are disordered; that stretch reads QNSSNGRISP…ASSQVDSTSV (70 aa). At Ser49 the chain carries Phosphoserine. Residues 54 to 68 show a composition bias toward polar residues; that stretch reads SVTSLSESLPVQCTD. Positions 83 to 94 are enriched in low complexity; the sequence is SSVQPSPVSNQS. Residues 95 to 110 show a composition bias toward polar residues; sequence LLSESVASSQVDSTSV. Residues 143–189 form an AN1-type zinc finger; the sequence is KQKKNRCFMCRKKVGLTGFECRCGNVYCGVHRYSDVHNCSYNYKADA. Zn(2+) contacts are provided by Cys149, Cys152, Cys163, Cys165, Cys170, His173, His179, and Cys181. N6-acetyllysine is present on Lys204.

In terms of assembly, interacts with PKN1.

This Bos taurus (Bovine) protein is AN1-type zinc finger protein 6 (ZFAND6).